We begin with the raw amino-acid sequence, 207 residues long: Ribonuclease HII (207 aa).

In terms of domain architecture, RNase H type-2 spans 12-201; the sequence is ALVAGVDEVG…VRELLDVVSI (190 aa). Residues Asp18, Glu19, and Asp110 each coordinate a divalent metal cation.

Belongs to the RNase HII family. The cofactor is Mn(2+). Mg(2+) serves as cofactor.

It localises to the cytoplasm. The catalysed reaction is Endonucleolytic cleavage to 5'-phosphomonoester.. Its function is as follows. Endonuclease that specifically degrades the RNA of RNA-DNA hybrids. In Azotobacter vinelandii (strain DJ / ATCC BAA-1303), this protein is Ribonuclease HII.